Here is a 227-residue protein sequence, read N- to C-terminus: MRTWAVLPILLMLVGCVTQRIVEPQPHSAPIAARQVQPEQPQAPGSLWTEGRGSLFRDNKARRVGDIVTVAIYEQASASKQASTATGRSSSMSAGLTNLFGIEGNIGNLNKFIDPTSLIDTSYENAFDGSGSTSRKEDLVATLTAQVIEELPNGNLCIAGGKTVTVNREDQIILLEGIIRPEDISARNVVSSKHILDAKIAYTGKGVISDKQRPGWMTRVLDHIWPF.

Positions 1–15 (MRTWAVLPILLMLVG) are cleaved as a signal peptide. The N-palmitoyl cysteine moiety is linked to residue Cys16. Cys16 carries the S-diacylglycerol cysteine lipid modification.

It belongs to the FlgH family. As to quaternary structure, the basal body constitutes a major portion of the flagellar organelle and consists of four rings (L,P,S, and M) mounted on a central rod.

Its subcellular location is the cell outer membrane. It localises to the bacterial flagellum basal body. In terms of biological role, assembles around the rod to form the L-ring and probably protects the motor/basal body from shearing forces during rotation. The chain is Flagellar L-ring protein from Syntrophotalea carbinolica (strain DSM 2380 / NBRC 103641 / GraBd1) (Pelobacter carbinolicus).